Here is a 447-residue protein sequence, read N- to C-terminus: uncharacterized protein (447 aa).

The protein belongs to the class-II fumarase/aspartase family.

Its subcellular location is the cytoplasm. It localises to the nucleus. This is an uncharacterized protein from Schizosaccharomyces pombe (strain 972 / ATCC 24843) (Fission yeast).